The following is a 349-amino-acid chain: Glycerol-3-phosphate dehydrogenase [NAD(+)], cytoplasmic (349 aa).

10-15 contacts NAD(+); that stretch reads GSGNWG. Position 120 (Lys-120) interacts with substrate. Ala-153 lines the NAD(+) pocket. A Phosphoserine modification is found at Ser-154. Lys-204 acts as the Proton acceptor in catalysis. An NAD(+)-binding site is contributed by Arg-269. 269 to 270 lines the substrate pocket; sequence RN. Lys-289 is subject to N6-succinyllysine. Residues Lys-296 and Gln-298 each contribute to the NAD(+) site. At Tyr-326 the chain carries Phosphotyrosine.

The protein belongs to the NAD-dependent glycerol-3-phosphate dehydrogenase family. As to quaternary structure, homodimer.

It is found in the cytoplasm. It catalyses the reaction sn-glycerol 3-phosphate + NAD(+) = dihydroxyacetone phosphate + NADH + H(+). Has glycerol-3-phosphate dehydrogenase activity. This Pongo abelii (Sumatran orangutan) protein is Glycerol-3-phosphate dehydrogenase [NAD(+)], cytoplasmic (GPD1).